Here is a 180-residue protein sequence, read N- to C-terminus: Ribosome-recycling factor (180 aa).

The protein belongs to the RRF family.

The protein localises to the cytoplasm. Responsible for the release of ribosomes from messenger RNA at the termination of protein biosynthesis. May increase the efficiency of translation by recycling ribosomes from one round of translation to another. This is Ribosome-recycling factor from Chlamydia felis (strain Fe/C-56) (Chlamydophila felis).